The chain runs to 359 residues: Methylthioribose-1-phosphate isomerase (359 aa).

The active-site Proton donor is D235.

The protein belongs to the eIF-2B alpha/beta/delta subunits family. MtnA subfamily.

The protein resides in the cytoplasm. It localises to the nucleus. It carries out the reaction 5-(methylsulfanyl)-alpha-D-ribose 1-phosphate = 5-(methylsulfanyl)-D-ribulose 1-phosphate. Its pathway is amino-acid biosynthesis; L-methionine biosynthesis via salvage pathway; L-methionine from S-methyl-5-thio-alpha-D-ribose 1-phosphate: step 1/6. Catalyzes the interconversion of methylthioribose-1-phosphate (MTR-1-P) into methylthioribulose-1-phosphate (MTRu-1-P). The polypeptide is Methylthioribose-1-phosphate isomerase (mri1) (Schizosaccharomyces pombe (strain 972 / ATCC 24843) (Fission yeast)).